Here is a 470-residue protein sequence, read N- to C-terminus: Cyclic AMP receptor-like protein D (470 aa).

The Extracellular portion of the chain corresponds to 1–16 (MSSCSSLSMDDRVKIG). Residues 17–37 (YGSIAGASLSIIGSIGTIILI) traverse the membrane as a helical segment. Over 38-123 (KIRNKKQEKK…NNNQKTKVSH (86 aa)) the chain is Cytoplasmic. Residues 124–144 (FIINLSIANLLASIFMITIKL) traverse the membrane as a helical segment. Residues 145–176 (MMIHFNDKFIKVLPSTANHSFNALISVCTIGN) are Extracellular-facing. N162 carries N-linked (GlcNAc...) asparagine glycosylation. A disulfide bridge connects residues C172 and C287. The chain crosses the membrane as a helical span at residues 177–197 (GVIGFSFISTFFWTLAISMYI). Topologically, residues 198–253 (YQQFLSSSTINSNNNNNNINNINNNNNNNINNINNSKNNNSINNFNNSNKSNKIIK) are cytoplasmic. Residues 254–274 (MLFYFVCWVIPFVLGSILVSG) traverse the membrane as a helical segment. The Extracellular portion of the chain corresponds to 275-295 (SRLIELNSDLPWCSIDSNIQL). Residues 296 to 316 (ISFYFPLIICLLATTFFTILI) traverse the membrane as a helical segment. Residues 317 to 342 (KYKFSNDKLACSSSSLINLQSKIIQR) lie on the Cytoplasmic side of the membrane. Residues 343 to 363 (LILFLIVILVCWVPSLISFFI) traverse the membrane as a helical segment. Residues 364-372 (SFFSKNCKQ) lie on the Extracellular side of the membrane. A helical membrane pass occupies residues 373–393 (FLWLEIISSTIQSCQGILNFL). Residues 394–470 (SYLSIFKKLK…DFDNNQIQEK (77 aa)) lie on the Cytoplasmic side of the membrane.

Belongs to the G-protein coupled receptor 5 family.

The protein resides in the membrane. Its function is as follows. Receptor for cAMP. The protein is Cyclic AMP receptor-like protein D (crlD) of Dictyostelium discoideum (Social amoeba).